The following is a 584-amino-acid chain: Pectinesterase 1 (584 aa).

The signal sequence occupies residues M1–A42. N-linked (GlcNAc...) asparagine glycans are attached at residues N108, N129, and N226. The substrate site is built by T348 and Q378. Residue D401 is the Proton donor of the active site. C415 and C435 are joined by a disulfide. D422 acts as the Nucleophile in catalysis. R490 and W492 together coordinate substrate.

It in the N-terminal section; belongs to the PMEI family. In the C-terminal section; belongs to the pectinesterase family. As to expression, expressed at high levels in flower buds, shoots and young leaves, and at lower levels in young fruit, young bark and juice vesicles. Not expressed at significant levels in leaf abscission zones following ethylene treatment or in mature leaves. In fruit abscission zones, expression was initially undetectable but increased markedly following ethylene treatment.

It is found in the secreted. The protein localises to the cell wall. The catalysed reaction is [(1-&gt;4)-alpha-D-galacturonosyl methyl ester](n) + n H2O = [(1-&gt;4)-alpha-D-galacturonosyl](n) + n methanol + n H(+). The protein operates within glycan metabolism; pectin degradation; 2-dehydro-3-deoxy-D-gluconate from pectin: step 1/5. In terms of biological role, acts in the modification of cell walls via demethylesterification of cell wall pectin. In Citrus sinensis (Sweet orange), this protein is Pectinesterase 1 (PECS-1.1).